A 159-amino-acid chain; its full sequence is Ribosomal RNA large subunit methyltransferase H (159 aa).

Residues leucine 76, glycine 108, and methionine 127 to phenylalanine 132 contribute to the S-adenosyl-L-methionine site.

The protein belongs to the RNA methyltransferase RlmH family. In terms of assembly, homodimer.

It is found in the cytoplasm. The catalysed reaction is pseudouridine(1915) in 23S rRNA + S-adenosyl-L-methionine = N(3)-methylpseudouridine(1915) in 23S rRNA + S-adenosyl-L-homocysteine + H(+). Its function is as follows. Specifically methylates the pseudouridine at position 1915 (m3Psi1915) in 23S rRNA. The sequence is that of Ribosomal RNA large subunit methyltransferase H from Ureaplasma parvum serovar 3 (strain ATCC 27815 / 27 / NCTC 11736).